The primary structure comprises 227 residues: UPF0173 metal-dependent hydrolase Bcer98_3294 (227 aa).

It belongs to the UPF0173 family.

The chain is UPF0173 metal-dependent hydrolase Bcer98_3294 from Bacillus cytotoxicus (strain DSM 22905 / CIP 110041 / 391-98 / NVH 391-98).